The sequence spans 359 residues: MFYCRSGFEKECAGEIQDKATQLEVFGFPRLKNNTGYVLFECYQEGDADRLIREIKFNELIFARQMFAVAVEVSDLPKDDRISPILDALSEVEDVPCCGDIRIETPDTNEAKELLKFCRKFTVPMRQALRGKKMLTERDSNRIPVLHICFIAPGHCYVGYSYTNNNSQFFMGIPRLKFPADAPSRSTLKLEEAFHVFIPKEEWDDRLASGMWGVDLGACPGGWTYQLVKRSMFVHAIDNGMMAQSLMDTGQVKHHMVDGFKFEPPRKNVTWLICDMVEKPARVAHLMGEWLIKGWAKEALFNLKLPMKGRYDEVLQDIENLKDFLKKNGFQYKLQAKHLYHDREEITVHIQAISNISPH.

Residues Ser-186, 219 to 222 (CPGG), Asp-238, Asp-258, and Asp-275 each bind S-adenosyl-L-methionine. Lys-304 acts as the Proton acceptor in catalysis.

Belongs to the class I-like SAM-binding methyltransferase superfamily. RNA methyltransferase RlmE family. RlmM subfamily. Monomer.

It localises to the cytoplasm. It carries out the reaction cytidine(2498) in 23S rRNA + S-adenosyl-L-methionine = 2'-O-methylcytidine(2498) in 23S rRNA + S-adenosyl-L-homocysteine + H(+). Its function is as follows. Catalyzes the 2'-O-methylation at nucleotide C2498 in 23S rRNA. This chain is Ribosomal RNA large subunit methyltransferase M, found in Aliivibrio fischeri (strain MJ11) (Vibrio fischeri).